A 423-amino-acid chain; its full sequence is MASALEQFVNSVRQLSAQGQMTQLCELINKSGELLAKNLSHLDTVLGALDVQEHSLGVLAVLFVKFSMPSVPDFETLFSQVQLFISTCNGEHIRYATDTFAGLCHQLTNALVERKQPLRGIGVLRQAIDKMQMNTNQLTSVHADLCQLCLLAKCFKPALPYLDVDMVDICKENGAYDAKHFLCYYYYGGMVYTGLKNFERALYFYEQAITTPAMAVSHIMLESYKKYILVSLILLGKVQQLPKYTSQIVGRFIKPLSNAYHELAQVYSTNNPSELRSLVTKHSEIFTRDNNMGLVKQCLSSLYKKNIQRLTKTFLTLSLQDMASRVQLSGPQEAEKYVLHMIEDGEIFASINQKDGMVSFHDNPEKYNNPAMLHNIDQEMLKCIELDERLKAMDQEITVNPQFVQKSMGSQEDDSGNKPSSYS.

Residue Ala-2 is modified to N-acetylalanine. In terms of domain architecture, PCI spans 197–365; the sequence is NFERALYFYE…GMVSFHDNPE (169 aa). The segment at 402 to 423 is disordered; the sequence is QFVQKSMGSQEDDSGNKPSSYS. Phosphoserine is present on residues Ser-407, Ser-410, and Ser-423.

Belongs to the CSN3 family. As to quaternary structure, component of the CSN complex, composed of COPS1/GPS1, COPS2, COPS3, COPS4, COPS5, COPS6, COPS7 (COPS7A or COPS7B), COPS8 and COPS9. In the complex, it probably interacts directly with COPS1, COPS4, COPS8 and COPS9. Interacts with CK2 and PKD. Interacts with the translation initiation factor EIF3S6 and IKBKG. Interacts with ERCC6.

The protein localises to the cytoplasm. The protein resides in the nucleus. Functionally, component of the COP9 signalosome complex (CSN), a complex involved in various cellular and developmental processes. The CSN complex is an essential regulator of the ubiquitin (Ubl) conjugation pathway by mediating the deneddylation of the cullin subunits of SCF-type E3 ligase complexes, leading to decrease the Ubl ligase activity of SCF-type complexes such as SCF, CSA or DDB2. The complex is also involved in phosphorylation of p53/TP53, c-jun/JUN, IkappaBalpha/NFKBIA, ITPK1 and IRF8/ICSBP, possibly via its association with CK2 and PKD kinases. CSN-dependent phosphorylation of TP53 and JUN promotes and protects degradation by the Ubl system, respectively. Essential to maintain the survival of epiblast cells and thus the development of the postimplantation embryo. The sequence is that of COP9 signalosome complex subunit 3 (COPS3) from Bos taurus (Bovine).